Consider the following 2291-residue polypeptide: Protein Ycf2 B (2291 aa).

Residue glycine 1642–serine 1649 participates in ATP binding.

The protein belongs to the Ycf2 family.

The protein resides in the plastid. It is found in the chloroplast stroma. In terms of biological role, probable ATPase of unknown function. Its presence in a non-photosynthetic plant (Epifagus virginiana) and experiments in tobacco indicate that it has an essential function which is probably not related to photosynthesis. The sequence is that of Protein Ycf2 B (ycf2-B) from Atropa belladonna (Belladonna).